We begin with the raw amino-acid sequence, 234 residues long: Ribosomal RNA small subunit methyltransferase G (234 aa).

Residues Gly-96, Leu-101, 119–121 (DAT), 147–148 (VE), and Arg-161 each bind S-adenosyl-L-methionine.

Belongs to the methyltransferase superfamily. RNA methyltransferase RsmG family.

The protein resides in the cytoplasm. Functionally, specifically methylates the N7 position of a guanine in 16S rRNA. This is Ribosomal RNA small subunit methyltransferase G from Chlorobium chlorochromatii (strain CaD3).